The chain runs to 283 residues: Para-Rep C10 (283 aa).

Residues 3–96 form the CRESS-DNA virus Rep endonuclease domain; sequence SIRAIHWCFT…IDGPWEYGTW (94 aa). An RCR-1 motif is present at residues 10–13; the sequence is CFTL. Residues Glu-36 and His-42 each contribute to the a divalent metal cation site. Residues 42 to 44 carry the RCR-2 motif; sequence HLQ. A Nuclear localization signal motif is present at residues 51-71; the sequence is KQTTLKKMKELLPGAHLEMAR. The active-site For DNA cleavage activity is Tyr-79. The short motif at 79-82 is the RCR-3 element; sequence YCQK. Glu-84 contacts a divalent metal cation. The Nuclear localization signal signature appears at 96–102; sequence WISTGSH. 172 to 180 serves as a coordination point for ATP; it reads GPHGGEGKS.

Belongs to the nanoviridea/circoviridae replication-associated protein family. As to quaternary structure, homooligomer (Potential). Rep binds to repeated DNA motifs (iterons). Requires Mg(2+) as cofactor. Mn(2+) serves as cofactor.

Its subcellular location is the host nucleus. It catalyses the reaction ATP + H2O = ADP + phosphate + H(+). Initiates and terminates the replication only of its own subviral DNA molecule. The closed circular ssDNA genome is first converted to a superhelical dsDNA. Rep binds a specific hairpin at the genome origin of replication. Introduces an endonucleolytic nick within the intergenic region of the genome, thereby initiating the rolling circle replication (RCR). Following cleavage, binds covalently to the 5'-phosphate of DNA as a tyrosyl ester. The cleavage gives rise to a free 3'-OH that serves as a primer for the cellular DNA polymerase. The polymerase synthesizes the (+) strand DNA by rolling circle mechanism. After one round of replication, a Rep-catalyzed nucleotidyl transfer reaction releases a circular single-stranded virus genome, thereby terminating the replication. Displays origin-specific DNA cleavage, nucleotidyl transferase, ATPase and helicase activities. The protein is Para-Rep C10 (C10) of Milk vetch dwarf C10 alphasatellite (MVDC10A).